A 186-amino-acid polypeptide reads, in one-letter code: Protein GrpE (186 aa).

A compositionally biased stretch (polar residues) spans 1 to 13 (MSENTQPEQNQPL). The segment at 1–22 (MSENTQPEQNQPLTGAPSPEEL) is disordered.

It belongs to the GrpE family. In terms of assembly, homodimer.

It localises to the cytoplasm. Its function is as follows. Participates actively in the response to hyperosmotic and heat shock by preventing the aggregation of stress-denatured proteins, in association with DnaK and GrpE. It is the nucleotide exchange factor for DnaK and may function as a thermosensor. Unfolded proteins bind initially to DnaJ; upon interaction with the DnaJ-bound protein, DnaK hydrolyzes its bound ATP, resulting in the formation of a stable complex. GrpE releases ADP from DnaK; ATP binding to DnaK triggers the release of the substrate protein, thus completing the reaction cycle. Several rounds of ATP-dependent interactions between DnaJ, DnaK and GrpE are required for fully efficient folding. This chain is Protein GrpE, found in Polaromonas sp. (strain JS666 / ATCC BAA-500).